Consider the following 510-residue polypeptide: ATP synthase subunit alpha (510 aa).

169-176 (GDRQTGKT) contacts ATP.

This sequence belongs to the ATPase alpha/beta chains family. F-type ATPases have 2 components, CF(1) - the catalytic core - and CF(0) - the membrane proton channel. CF(1) has five subunits: alpha(3), beta(3), gamma(1), delta(1), epsilon(1). CF(0) has three main subunits: a(1), b(2) and c(9-12). The alpha and beta chains form an alternating ring which encloses part of the gamma chain. CF(1) is attached to CF(0) by a central stalk formed by the gamma and epsilon chains, while a peripheral stalk is formed by the delta and b chains.

Its subcellular location is the cell inner membrane. It carries out the reaction ATP + H2O + 4 H(+)(in) = ADP + phosphate + 5 H(+)(out). Its function is as follows. Produces ATP from ADP in the presence of a proton gradient across the membrane. The alpha chain is a regulatory subunit. The sequence is that of ATP synthase subunit alpha from Rickettsia conorii (strain ATCC VR-613 / Malish 7).